Consider the following 168-residue polypeptide: MEYYNVGKIVNTHGVRGEVRVLATTDFIDERFAKGNTLYLQQSGEPLPLTIESTRQHKGFVLVKFVGYDNINDVEQFRDHELMVSADDQQPLDDGQYYYHQIIGLDVETTDGRHLGKIKEILSPGANDVWVVERPEKRDLLLPVIDEVVKNVDLDKNFVTVELMEGLE.

In terms of domain architecture, PRC barrel spans 94–167 (DGQYYYHQII…FVTVELMEGL (74 aa)).

Belongs to the RimM family. Binds ribosomal protein uS19.

It localises to the cytoplasm. Functionally, an accessory protein needed during the final step in the assembly of 30S ribosomal subunit, possibly for assembly of the head region. Essential for efficient processing of 16S rRNA. May be needed both before and after RbfA during the maturation of 16S rRNA. It has affinity for free ribosomal 30S subunits but not for 70S ribosomes. In Limosilactobacillus reuteri (strain DSM 20016) (Lactobacillus reuteri), this protein is Ribosome maturation factor RimM.